The sequence spans 127 residues: Two-component response regulator ORR41 (127 aa).

A Response regulatory domain is found at R7–R125. 4-aspartylphosphate is present on D60.

Belongs to the ARR family. Type-C subfamily. In terms of processing, two-component system major event consists of a His-to-Asp phosphorelay between a sensor histidine kinase (HK) and a response regulator (RR). In plants, the His-to-Asp phosphorelay involves an additional intermediate named Histidine-containing phosphotransfer protein (HPt). This multistep phosphorelay consists of a His-Asp-His-Asp sequential transfer of a phosphate group between first a His and an Asp of the HK protein, followed by the transfer to a conserved His of the HPt protein and finally the transfer to an Asp in the receiver domain of the RR protein.

In terms of biological role, functions as a response regulator involved in His-to-Asp phosphorelay signal transduction system. Phosphorylation of the Asp residue in the receiver domain activates the ability of the protein to promote the transcription of target genes. May directly activate some type-A response regulators in response to cytokinins. The protein is Two-component response regulator ORR41 of Oryza sativa subsp. japonica (Rice).